Here is a 201-residue protein sequence, read N- to C-terminus: Ran-specific GTPase-activating protein 1 (201 aa).

Composition is skewed to basic and acidic residues over residues 1–17 and 32–66; these read MSSEDKKPVVDKKEEAA and KKAEKPETKKDEEDTKEETKKEGDDAPESPDIHFE. The interval 1-66 is disordered; the sequence is MSSEDKKPVV…APESPDIHFE (66 aa). Ser60 carries the phosphoserine modification. The 137-residue stretch at 64–200 folds into the RanBD1 domain; it reads HFEPVVHLEK…FEKAQEINKK (137 aa).

This sequence belongs to the RANBP1 family. In terms of assembly, interacts with GSP1 and PRP20.

Its subcellular location is the cytoplasm. It localises to the nucleus. Important for the export of protein containing nuclear export signal (NES) out of the nucleus. Stimulates the GTPase activity of GSP1 and GSP2. The protein is Ran-specific GTPase-activating protein 1 (YRB1) of Saccharomyces cerevisiae (strain ATCC 204508 / S288c) (Baker's yeast).